A 163-amino-acid polypeptide reads, in one-letter code: MLRIDPNELELTDRVVHINRCAKVVKGGRRFSFSALVVVGDGQGIVGYGHGKAKEVPEAIRKGVEQAKKNLIRVPLKDRSIPFDVIGKFGAGRVLLKPASAGTGVIAGGAVRAVLEVSGVGDILSKCIGSNNPHNVVRATIDALSRLKSAEELRALRGADTEE.

Residues 11–74 (LTDRVVHINR…EQAKKNLIRV (64 aa)) enclose the S5 DRBM domain.

This sequence belongs to the universal ribosomal protein uS5 family. As to quaternary structure, part of the 30S ribosomal subunit. Contacts proteins S4 and S8.

Functionally, with S4 and S12 plays an important role in translational accuracy. Its function is as follows. Located at the back of the 30S subunit body where it stabilizes the conformation of the head with respect to the body. This chain is Small ribosomal subunit protein uS5, found in Syntrophotalea carbinolica (strain DSM 2380 / NBRC 103641 / GraBd1) (Pelobacter carbinolicus).